Consider the following 370-residue polypeptide: GMP synthase [glutamine-hydrolyzing] subunit B (370 aa).

Residues 3 to 189 (FDPQKFVDEI…LGLPRDIYNR (187 aa)) form the GMPS ATP-PPase domain. Residue 29–35 (SGGVDST) participates in ATP binding.

Heterodimer composed of a glutamine amidotransferase subunit (A) and a GMP-binding subunit (B).

The catalysed reaction is XMP + L-glutamine + ATP + H2O = GMP + L-glutamate + AMP + diphosphate + 2 H(+). The protein operates within purine metabolism; GMP biosynthesis; GMP from XMP (L-Gln route): step 1/1. Functionally, catalyzes the synthesis of GMP from XMP. This chain is GMP synthase [glutamine-hydrolyzing] subunit B (guaAB), found in Sulfurisphaera tokodaii (strain DSM 16993 / JCM 10545 / NBRC 100140 / 7) (Sulfolobus tokodaii).